We begin with the raw amino-acid sequence, 131 residues long: Small ribosomal subunit protein uS11 (131 aa).

Residues 1-15 (MAAKTVKKTRRRKER) are compositionally biased toward basic residues. Residues 1–23 (MAAKTVKKTRRRKERKNVEHGAA) form a disordered region.

Belongs to the universal ribosomal protein uS11 family. In terms of assembly, part of the 30S ribosomal subunit. Interacts with proteins S7 and S18. Binds to IF-3.

Its function is as follows. Located on the platform of the 30S subunit, it bridges several disparate RNA helices of the 16S rRNA. Forms part of the Shine-Dalgarno cleft in the 70S ribosome. The polypeptide is Small ribosomal subunit protein uS11 (Clostridium beijerinckii (strain ATCC 51743 / NCIMB 8052) (Clostridium acetobutylicum)).